Reading from the N-terminus, the 344-residue chain is L-threonine 3-dehydrogenase (344 aa).

Residue Cys-42 participates in Zn(2+) binding. Catalysis depends on charge relay system residues Thr-44 and His-47. 6 residues coordinate Zn(2+): His-67, Glu-68, Cys-97, Cys-100, Cys-103, and Cys-111. NAD(+) is bound by residues Ile-179, Asp-199, Arg-204, 266–268 (LGI), and 290–291 (IY).

The protein belongs to the zinc-containing alcohol dehydrogenase family. As to quaternary structure, homotetramer. Zn(2+) serves as cofactor.

It is found in the cytoplasm. It catalyses the reaction L-threonine + NAD(+) = (2S)-2-amino-3-oxobutanoate + NADH + H(+). It participates in amino-acid degradation; L-threonine degradation via oxydo-reductase pathway; glycine from L-threonine: step 1/2. Catalyzes the NAD(+)-dependent oxidation of L-threonine to 2-amino-3-ketobutyrate. This Sinorhizobium medicae (strain WSM419) (Ensifer medicae) protein is L-threonine 3-dehydrogenase.